Here is a 173-residue protein sequence, read N- to C-terminus: Crossover junction endodeoxyribonuclease RuvC (173 aa).

Catalysis depends on residues Asp8, Glu67, and Asp139. Residues Asp8, Glu67, and Asp139 each coordinate Mg(2+).

This sequence belongs to the RuvC family. Homodimer which binds Holliday junction (HJ) DNA. The HJ becomes 2-fold symmetrical on binding to RuvC with unstacked arms; it has a different conformation from HJ DNA in complex with RuvA. In the full resolvosome a probable DNA-RuvA(4)-RuvB(12)-RuvC(2) complex forms which resolves the HJ. It depends on Mg(2+) as a cofactor.

It localises to the cytoplasm. It carries out the reaction Endonucleolytic cleavage at a junction such as a reciprocal single-stranded crossover between two homologous DNA duplexes (Holliday junction).. In terms of biological role, the RuvA-RuvB-RuvC complex processes Holliday junction (HJ) DNA during genetic recombination and DNA repair. Endonuclease that resolves HJ intermediates. Cleaves cruciform DNA by making single-stranded nicks across the HJ at symmetrical positions within the homologous arms, yielding a 5'-phosphate and a 3'-hydroxyl group; requires a central core of homology in the junction. The consensus cleavage sequence is 5'-(A/T)TT(C/G)-3'. Cleavage occurs on the 3'-side of the TT dinucleotide at the point of strand exchange. HJ branch migration catalyzed by RuvA-RuvB allows RuvC to scan DNA until it finds its consensus sequence, where it cleaves and resolves the cruciform DNA. In Vibrio cholerae serotype O1 (strain ATCC 39541 / Classical Ogawa 395 / O395), this protein is Crossover junction endodeoxyribonuclease RuvC.